The chain runs to 921 residues: GPI ethanolamine phosphate transferase 1 (921 aa).

The helical transmembrane segment at 37–57 (PGHVALIAGLYEDVSAVTTGW) threads the bilayer. Residues Asn-69 and Asn-132 are each glycosylated (N-linked (GlcNAc...) asparagine). A run of 10 helical transmembrane segments spans residues 386-406 (ALITIGYLGWVAYALTTVIDL), 418-438 (TLIGTIISTSALTALYASFAI), 441-461 (SPLTYYAYAFFPVFFWEEVYA), 483-503 (FVSLVFNCAVYVGIIESLALG), 509-529 (ILTILFVIGAFWPIAYGFSFL), 533-553 (MALSITWFLSCIAMSTFTLLP), 561-581 (VNMIMLGGALMVLVGIIYLIL), 606-626 (LVGIQIGLTLLAALVTRSSAL), 640-660 (VMGWVVLVVSLLMPLAYRAKP), and 679-699 (FVILTISYEGLFYIAFSAVLV). A disordered region spans residues 715–737 (SANGAARSAPSPAKPHNLETSQT). A run of 4 helical transmembrane segments spans residues 752–772 (VALFFFVLFQAAFFSTGNVAS), 795–815 (AMLILKLLIPFALISANLGIL), 825–845 (ALFMVVMAISDILTLYFFWVV), and 862–882 (VIASLLCVFVAALEGVSAMFI).

The protein belongs to the PIGG/PIGN/PIGO family. PIGN subfamily.

It localises to the endoplasmic reticulum membrane. It functions in the pathway glycolipid biosynthesis; glycosylphosphatidylinositol-anchor biosynthesis. Functionally, ethanolamine phosphate transferase involved in glycosylphosphatidylinositol-anchor biosynthesis. Transfers ethanolamine phosphate to the first alpha-1,4-linked mannose of the glycosylphosphatidylinositol precursor of GPI-anchor. The protein is GPI ethanolamine phosphate transferase 1 (MCD4) of Chaetomium globosum (strain ATCC 6205 / CBS 148.51 / DSM 1962 / NBRC 6347 / NRRL 1970) (Soil fungus).